The primary structure comprises 99 residues: Large ribosomal subunit protein bL21 (99 aa).

The protein belongs to the bacterial ribosomal protein bL21 family. Part of the 50S ribosomal subunit. Contacts protein L20.

In terms of biological role, this protein binds to 23S rRNA in the presence of protein L20. In Mesomycoplasma hyopneumoniae (strain 232) (Mycoplasma hyopneumoniae), this protein is Large ribosomal subunit protein bL21.